We begin with the raw amino-acid sequence, 841 residues long: Translation initiation factor IF-2 (841 aa).

Composition is skewed to basic and acidic residues over residues Met1–Lys12, Glu50–Lys92, Glu114–Ala170, Arg188–Arg202, and Lys213–Gly235. 2 disordered regions span residues Met1 to Val24 and Glu50 to Leu246. Residues Thr340–Thr510 form the tr-type G domain. A G1 region spans residues Gly349–Thr356. Gly349 to Thr356 serves as a coordination point for GTP. The interval Gly374–His378 is G2. Residues Asp396–Gly399 form a G3 region. GTP-binding positions include Asp396–His400 and Asn450–Asp453. Positions Asn450–Asp453 are G4. Residues Ser486 to Lys488 are G5.

The protein belongs to the TRAFAC class translation factor GTPase superfamily. Classic translation factor GTPase family. IF-2 subfamily.

Its subcellular location is the cytoplasm. In terms of biological role, one of the essential components for the initiation of protein synthesis. Protects formylmethionyl-tRNA from spontaneous hydrolysis and promotes its binding to the 30S ribosomal subunits. Also involved in the hydrolysis of GTP during the formation of the 70S ribosomal complex. This chain is Translation initiation factor IF-2, found in Actinobacillus pleuropneumoniae serotype 3 (strain JL03).